The primary structure comprises 65 residues: Large ribosomal subunit protein uL29 (65 aa).

This sequence belongs to the universal ribosomal protein uL29 family.

In Brevibacillus brevis (strain 47 / JCM 6285 / NBRC 100599), this protein is Large ribosomal subunit protein uL29.